A 652-amino-acid chain; its full sequence is Complement component C1q receptor (652 aa).

An N-terminal signal peptide occupies residues Met-1–Gly-21. Residues Ala-24–Lys-580 are Extracellular-facing. A C-type lectin domain is found at Val-32–Asn-174. 16 disulfide bridges follow: Cys-141/Cys-165, Cys-264/Cys-275, Cys-271/Cys-285, Cys-287/Cys-300, Cys-306/Cys-317, Cys-311/Cys-328, Cys-330/Cys-343, Cys-349/Cys-358, Cys-354/Cys-367, Cys-369/Cys-383, Cys-389/Cys-400, Cys-396/Cys-409, Cys-411/Cys-425, Cys-431/Cys-443, Cys-439/Cys-452, and Cys-454/Cys-467. EGF-like domains are found at residues Pro-260–Ala-301 and Ser-302–Val-344. N-linked (GlcNAc...) asparagine glycosylation occurs at Asn-325. In terms of domain architecture, EGF-like 3; calcium-binding spans Asp-345 to Gln-384. The region spanning Asp-385–Gln-426 is the EGF-like 4; calcium-binding domain. Residues Asp-427–Thr-468 form the EGF-like 5; calcium-binding domain. Disordered stretches follow at residues Val-472 to Glu-546 and Thr-553 to Asn-572. Residues Ala-512–Pro-526 show a composition bias toward polar residues. The helical transmembrane segment at Leu-581–Leu-601 threads the bilayer. The Cytoplasmic portion of the chain corresponds to Gly-602 to Cys-652. The disordered stretch occupies residues Ala-611–Cys-652. Residues Lys-612 to Pro-621 show a composition bias toward basic and acidic residues. At Ser-627 the chain carries Phosphoserine. Residues Tyr-628 and Tyr-644 each carry the phosphotyrosine modification. The span at Met-640 to Cys-652 shows a compositional bias: polar residues.

Homodimer. Interacts with C1QBP; the association may represent a cell surface C1q receptor. Interacts with surfactant protein A/SFTPA1. Interacts with multimerin-2/MMRN2. Interacts with DAG1; this interaction plays an important role in endothelial cell migration. Interacts with CBL. Interacts with IGFBP7. Interacts with VEGFR2. As to quaternary structure, (Microbial infection) Interacts with hepatitis virus C/HCV core protein. In terms of processing, N- and O-glycosylated. Post-translationally, phosphorylated on Tyr-628 and Tyr-644 by SRC; these phosphorylations promote endothelial cell adhesion and migration. In terms of tissue distribution, highly expressed in endothelial cells, platelets, cells of myeloid origin, such as monocytes and neutrophils. Not expressed in cells of lymphoid origin.

Its subcellular location is the cell membrane. In terms of biological role, cell surface receptor that plays a role in various physiological processes including inflammation, phagocytosis, and cell adhesion. Plays a role in phagocytosis and enhances the uptake of apoptotic cells and immune complexes by acting as a receptor for defense collagens including surfactant protein A/SFTPA1, C1q, and mannose-binding lectin (MBL2). Plays a role in the regulation of endothelial cell function and adhesion by activating angiogenesis. Mechanistically, exerts its angiogenic function by associating with beta-dystroglycan, leading to SRC-dependent phosphorylation and subsequent recruitment of CBL. In turn, CBL provides a docking site for downstream signaling components, such as CRKL to enhance cell migration. Participates in angiogenesis also by acting as a receptor for the ECM pan-endothelial glycoprotein multimerin-2/MMRN2 and IGFBP7 ligands. Both ligands play a non-redundant role in CD93-mediated endothelial cell function. Acts as a key regulator of endothelial barrier function through modulating VEGFR2 function. This chain is Complement component C1q receptor (CD93), found in Homo sapiens (Human).